The following is a 191-amino-acid chain: Fe/S biogenesis protein NfuA (191 aa).

The [4Fe-4S] cluster site is built by Cys-149 and Cys-152.

The protein belongs to the NfuA family. As to quaternary structure, homodimer. Requires [4Fe-4S] cluster as cofactor.

Involved in iron-sulfur cluster biogenesis. Binds a 4Fe-4S cluster, can transfer this cluster to apoproteins, and thereby intervenes in the maturation of Fe/S proteins. Could also act as a scaffold/chaperone for damaged Fe/S proteins. The sequence is that of Fe/S biogenesis protein NfuA from Buchnera aphidicola subsp. Baizongia pistaciae (strain Bp).